We begin with the raw amino-acid sequence, 264 residues long: MSATHLPDTQNSADTRHIIIDKVGIKDIIHPITYIDCDGNKMPTIGMFTMTVSLPEHVKGTHMSRFIEILNENSCEFSAHNFDQIIDKVKEKLESDTAHITLNFPFFRKKEAPSSGVKSMMDYQVTLYGTLNKGEVQVMIKVVVPVTSLCPCSKSISKYGAHNQRSHITIKAKVSKGRTLHIEDLIDLAERKASCELYALLKRDDEKMVTERAYDNPAFVEDLVRDIAVDLNADDKISYYCLESENFESIHNHSAYALIENLKC.

The protein belongs to the GTP cyclohydrolase IV family.

It carries out the reaction GTP + H2O = 7,8-dihydroneopterin 3'-triphosphate + formate + H(+). The protein operates within cofactor biosynthesis; 7,8-dihydroneopterin triphosphate biosynthesis; 7,8-dihydroneopterin triphosphate from GTP: step 1/1. Converts GTP to 7,8-dihydroneopterin triphosphate. This chain is GTP cyclohydrolase FolE2, found in Vesicomyosocius okutanii subsp. Calyptogena okutanii (strain HA).